The sequence spans 126 residues: Holo-[acyl-carrier-protein] synthase (126 aa).

Residues aspartate 9 and glutamate 58 each coordinate Mg(2+).

It belongs to the P-Pant transferase superfamily. AcpS family. Mg(2+) serves as cofactor.

The protein localises to the cytoplasm. The catalysed reaction is apo-[ACP] + CoA = holo-[ACP] + adenosine 3',5'-bisphosphate + H(+). Functionally, transfers the 4'-phosphopantetheine moiety from coenzyme A to a Ser of acyl-carrier-protein. This is Holo-[acyl-carrier-protein] synthase from Edwardsiella ictaluri (strain 93-146).